We begin with the raw amino-acid sequence, 508 residues long: Adenosine deaminase (508 aa).

The first 18 residues, Met1 to Ala18, serve as a signal peptide directing secretion.

This sequence belongs to the metallo-dependent hydrolases superfamily. Adenosine and AMP deaminases family. ADGF subfamily. Zn(2+) serves as cofactor. In terms of tissue distribution, salivary gland (at protein level).

It localises to the secreted. It carries out the reaction adenosine + H2O + H(+) = inosine + NH4(+). Catalyzes the deamination of adenosine to inosine. This Lutzomyia longipalpis (Sand fly) protein is Adenosine deaminase.